The chain runs to 87 residues: Small ribosomal subunit protein uS15c (87 aa).

Belongs to the universal ribosomal protein uS15 family. As to quaternary structure, part of the 30S ribosomal subunit.

It localises to the plastid. It is found in the chloroplast. This Amborella trichopoda protein is Small ribosomal subunit protein uS15c (rps15).